We begin with the raw amino-acid sequence, 278 residues long: HTH-type transcriptional activator RhaS (278 aa).

One can recognise an HTH araC/xylS-type domain in the interval 174–272 (NLLLAWLEDH…NWSPRDIRQG (99 aa)). 2 DNA-binding regions (H-T-H motif) span residues 191-212 (DAVA…KQQT) and 239-262 (VTDI…RREF).

In terms of assembly, binds DNA as a dimer.

The protein localises to the cytoplasm. Activates expression of the rhaBAD and rhaT operons. The chain is HTH-type transcriptional activator RhaS from Escherichia coli O6:H1 (strain CFT073 / ATCC 700928 / UPEC).